Here is a 257-residue protein sequence, read N- to C-terminus: Probable enoyl-CoA hydratase (257 aa).

The protein belongs to the enoyl-CoA hydratase/isomerase family.

It catalyses the reaction a (3S)-3-hydroxyacyl-CoA = a (2E)-enoyl-CoA + H2O. The enzyme catalyses a 4-saturated-(3S)-3-hydroxyacyl-CoA = a (3E)-enoyl-CoA + H2O. Its function is as follows. Could possibly oxidize fatty acids using specific components. This is Probable enoyl-CoA hydratase (fadB1) from Rhodobacter capsulatus (strain ATCC BAA-309 / NBRC 16581 / SB1003).